A 158-amino-acid polypeptide reads, in one-letter code: Transcription elongation factor GreB (158 aa).

Positions K53 to I75 form a coiled coil.

The protein belongs to the GreA/GreB family. GreB subfamily.

In terms of biological role, necessary for efficient RNA polymerase transcription elongation past template-encoded arresting sites. The arresting sites in DNA have the property of trapping a certain fraction of elongating RNA polymerases that pass through, resulting in locked ternary complexes. Cleavage of the nascent transcript by cleavage factors such as GreA or GreB allows the resumption of elongation from the new 3'terminus. GreB releases sequences of up to 9 nucleotides in length. The protein is Transcription elongation factor GreB of Pasteurella multocida (strain Pm70).